Here is a 688-residue protein sequence, read N- to C-terminus: Collagen alpha-2(IX) chain (688 aa).

Residues 1–22 (MAPAADPRSLLVLLQVLGLALA) form the signal peptide. The triple-helical region 4 (COL4) stretch occupies residues 26-162 (GLPGEPGPPG…PGKPGRPGTI (137 aa)). Disordered stretches follow at residues 26–520 (GLPG…RDAS), 549–578 (GATGMMGPPGPPGPPGYPGKQGPHGHPGPR), and 590–662 (IGNT…LPGF). Composition is skewed to pro residues over residues 30–42 (EPGPPGPPGPPGV) and 105–126 (LPGPPGLPGPGFAGPPGPPGPV). Over residues 128 to 138 (LPGEIGLTGPK) the composition is skewed to low complexity. Over residues 143-156 (PEGPSGPPGPPGKP) the composition is skewed to pro residues. Residue proline 159 is modified to 4-hydroxyproline. Residues 163 to 179 (QGLEGSADFLCPTNCPA) are nonhelical region 4 (NC4). An O-linked (Xyl...) (glycosaminoglycan) serine glycan is attached at serine 168. Residues 180 to 518 (GVKGPPGLQG…PGRQGVAGRD (339 aa)) form a triple-helical region 3 (COL3) region. Lysine 182 is modified (5-hydroxylysine). Residue lysine 182 is glycosylated (O-linked (Gal...) hydroxylysine). Composition is skewed to low complexity over residues 251–265 (KGMVGSVGAAGSPGE) and 394–412 (PVGQPGPQGRQGPKGEQGP). The segment covering 435–444 (GPRGGVGDPG) has biased composition (gly residues). Residues 497–506 (RGLVGDRGLP) show a composition bias toward low complexity. A nonhelical region 3 (NC3) region spans residues 519-548 (ASDQHIEDVVLKMLQEQLAEMAVSAKREAL). The tract at residues 549 to 631 (GATGMMGPPG…PGLPGRPGQA (83 aa)) is triple-helical region 2 (COL2). Over residues 556–565 (PPGPPGPPGY) the composition is skewed to pro residues. A compositionally biased stretch (basic and acidic residues) spans 598–610 (KRGEKGDQGEVGR). The nonhelical region 2 (NC2) stretch occupies residues 632-633 (IN). The triple-helical region 1 (COL1) stretch occupies residues 634-663 (GKDGDRGAPGAPGEAGRPGLPGPIGLPGFC). Low complexity predominate over residues 641–651 (APGAPGEAGRP). The segment at 664-688 (EPAACLGASAYASGRLTEPGSIKGP) is nonhelical region 1 (NC1).

It belongs to the fibril-associated collagens with interrupted helices (FACIT) family. Heterotrimer of an alpha 1(IX), an alpha 2(IX) and an alpha 3(IX) chain. The chains are linked to each other by interchain disulfide bonds. Trimers are also cross-linked via hydroxylysines. Post-translationally, prolines at the third position of the tripeptide repeating unit (G-X-Y) are hydroxylated in some or all of the chains. Covalently linked to the telopeptides of type II collagen by hydroxylysine-derived cross-links.

Its subcellular location is the secreted. The protein resides in the extracellular space. It localises to the extracellular matrix. In terms of biological role, structural component of hyaline cartilage and vitreous of the eye. This chain is Collagen alpha-2(IX) chain, found in Bos taurus (Bovine).